We begin with the raw amino-acid sequence, 147 residues long: Myoglobin (147 aa).

The 140-residue stretch at 2-141 folds into the Globin domain; sequence ADHDLVLKCW…VIGDIDGYYK (140 aa). Histidine 60 lines the nitrite pocket. Histidine 60 contacts O2. Residue histidine 89 coordinates heme b.

Belongs to the globin family. In terms of assembly, monomeric.

The protein localises to the cytoplasm. It localises to the sarcoplasm. The catalysed reaction is Fe(III)-heme b-[protein] + nitric oxide + H2O = Fe(II)-heme b-[protein] + nitrite + 2 H(+). The enzyme catalyses H2O2 + AH2 = A + 2 H2O. Monomeric heme protein which primary function is to store oxygen and facilitate its diffusion within muscle tissues. Reversibly binds oxygen through a pentacoordinated heme iron and enables its timely and efficient release as needed during periods of heightened demand. Depending on the oxidative conditions of tissues and cells, and in addition to its ability to bind oxygen, it also has a nitrite reductase activity whereby it regulates the production of bioactive nitric oxide. Under stress conditions, like hypoxia and anoxia, it also protects cells against reactive oxygen species thanks to its pseudoperoxidase activity. This chain is Myoglobin (mb), found in Danio rerio (Zebrafish).